The chain runs to 413 residues: Phosphoglycerate kinase (413 aa).

Substrate is bound by residues 24–26 (DFN), Arg-39, 62–65 (HLSR), Arg-123, and Arg-165. ATP is bound by residues Lys-216, Glu-343, and 369–372 (GGDS).

Belongs to the phosphoglycerate kinase family. As to quaternary structure, monomer.

The protein localises to the cytoplasm. It carries out the reaction (2R)-3-phosphoglycerate + ATP = (2R)-3-phospho-glyceroyl phosphate + ADP. The protein operates within carbohydrate degradation; glycolysis; pyruvate from D-glyceraldehyde 3-phosphate: step 2/5. This Mycoplasmoides gallisepticum (strain R(low / passage 15 / clone 2)) (Mycoplasma gallisepticum) protein is Phosphoglycerate kinase.